The following is a 124-amino-acid chain: Small ribosomal subunit protein bS6 (124 aa).

A compositionally biased stretch (basic and acidic residues) spans 105–115 (EVQHEEARKSA). Positions 105 to 124 (EVQHEEARKSAQSDAPVAAA) are disordered.

Belongs to the bacterial ribosomal protein bS6 family.

Binds together with bS18 to 16S ribosomal RNA. This chain is Small ribosomal subunit protein bS6, found in Polynucleobacter necessarius subsp. necessarius (strain STIR1).